We begin with the raw amino-acid sequence, 1204 residues long: Integrator complex subunit 2 (1204 aa).

A helical membrane pass occupies residues 428-444 (FVSLSFCMLLAFSTLVS).

The protein belongs to the Integrator subunit 2 family. In terms of assembly, component of the Integrator complex, composed of core subunits INTS1, INTS2, INTS3, INTS4, INTS5, INTS6, INTS7, INTS8, INTS9/RC74, INTS10, INTS11/CPSF3L, INTS12, INTS13, INTS14 and INTS15. The core complex associates with protein phosphatase 2A subunits PPP2CA and PPP2R1A, to form the Integrator-PP2A (INTAC) complex.

Its subcellular location is the nucleus. It localises to the nucleus membrane. The protein localises to the cytoplasm. Functionally, component of the integrator complex, a multiprotein complex that terminates RNA polymerase II (Pol II) transcription in the promoter-proximal region of genes. The integrator complex provides a quality checkpoint during transcription elongation by driving premature transcription termination of transcripts that are unfavorably configured for transcriptional elongation: the complex terminates transcription by (1) catalyzing dephosphorylation of the C-terminal domain (CTD) of Pol II subunit POLR2A/RPB1 and SUPT5H/SPT5, (2) degrading the exiting nascent RNA transcript via endonuclease activity and (3) promoting the release of Pol II from bound DNA. The integrator complex is also involved in terminating the synthesis of non-coding Pol II transcripts, such as enhancer RNAs (eRNAs), small nuclear RNAs (snRNAs), telomerase RNAs and long non-coding RNAs (lncRNAs). Mediates recruitment of cytoplasmic dynein to the nuclear envelope, probably as component of the integrator complex. In Homo sapiens (Human), this protein is Integrator complex subunit 2.